A 329-amino-acid chain; its full sequence is Phenylalanine--tRNA ligase alpha subunit (329 aa).

The protein belongs to the class-II aminoacyl-tRNA synthetase family. Phe-tRNA synthetase alpha subunit type 1 subfamily. In terms of assembly, tetramer of two alpha and two beta subunits. Mg(2+) is required as a cofactor.

The protein localises to the cytoplasm. It carries out the reaction tRNA(Phe) + L-phenylalanine + ATP = L-phenylalanyl-tRNA(Phe) + AMP + diphosphate + H(+). In Buchnera aphidicola subsp. Schizaphis graminum (strain Sg), this protein is Phenylalanine--tRNA ligase alpha subunit (pheS).